The chain runs to 168 residues: ATP synthase subunit b (168 aa).

The helical transmembrane segment at 9–29 (AIPFGTIAYTLFIFLILLVML) threads the bilayer.

The protein belongs to the ATPase B chain family. F-type ATPases have 2 components, F(1) - the catalytic core - and F(0) - the membrane proton channel. F(1) has five subunits: alpha(3), beta(3), gamma(1), delta(1), epsilon(1). F(0) has three main subunits: a(1), b(2) and c(10-14). The alpha and beta chains form an alternating ring which encloses part of the gamma chain. F(1) is attached to F(0) by a central stalk formed by the gamma and epsilon chains, while a peripheral stalk is formed by the delta and b chains.

It is found in the cell membrane. Functionally, f(1)F(0) ATP synthase produces ATP from ADP in the presence of a proton or sodium gradient. F-type ATPases consist of two structural domains, F(1) containing the extramembraneous catalytic core and F(0) containing the membrane proton channel, linked together by a central stalk and a peripheral stalk. During catalysis, ATP synthesis in the catalytic domain of F(1) is coupled via a rotary mechanism of the central stalk subunits to proton translocation. Its function is as follows. Component of the F(0) channel, it forms part of the peripheral stalk, linking F(1) to F(0). The polypeptide is ATP synthase subunit b (Bacillus cereus (strain G9842)).